A 425-amino-acid polypeptide reads, in one-letter code: cAMP/cGMP-dependent 3',5'-cAMP/cGMP phosphodiesterase 7 (425 aa).

A signal peptide spans 1–17 (MKYLILILIFFIEINNG).

Belongs to the cyclic nucleotide phosphodiesterase class-II family.

It localises to the secreted. The protein resides in the extracellular space. Its subcellular location is the cell surface. It carries out the reaction 3',5'-cyclic AMP + H2O = AMP + H(+). The enzyme catalyses 3',5'-cyclic GMP + H2O = GMP + H(+). With respect to regulation, inhibited by dithiotreitol (DTT). In terms of biological role, phosphodiesterase with dual cAMP/cGMP specificity. However, displays a preference for cAMP over cGMP. Seems to regulate cAMP/cGMP concentration especially during cell aggregation. This Dictyostelium discoideum (Social amoeba) protein is cAMP/cGMP-dependent 3',5'-cAMP/cGMP phosphodiesterase 7 (pde7).